A 64-amino-acid chain; its full sequence is MSRERISAQQTETTAAEQEQELTLAASHVVSDVSEVDDLLDEIDGLLAENAEDFVTGFVQKGGE.

The ARC ATPase binding stretch occupies residues 20-58 (QELTLAASHVVSDVSEVDDLLDEIDGLLAENAEDFVTGF). Glu-64 participates in a covalent cross-link: Isoglutamyl lysine isopeptide (Glu-Lys) (interchain with K-? in acceptor proteins).

Belongs to the prokaryotic ubiquitin-like protein family. As to quaternary structure, strongly interacts with the proteasome-associated ATPase ARC through a hydrophobic interface; the interacting region of Pup lies in its C-terminal half. There is one Pup binding site per ARC hexamer ring.

The protein operates within protein degradation; proteasomal Pup-dependent pathway. Its function is as follows. Protein modifier that is covalently attached to lysine residues of substrate proteins, thereby targeting them for proteasomal degradation. The tagging system is termed pupylation. This chain is Prokaryotic ubiquitin-like protein Pup, found in Rothia mucilaginosa (strain DY-18) (Stomatococcus mucilaginosus).